Reading from the N-terminus, the 206-residue chain is Glycerol-3-phosphate acyltransferase (206 aa).

5 helical membrane-spanning segments follow: residues 14-34 (IALAAAVIGYLFGSIPFGLIL), 67-87 (ATLLLDALKASAAAWIVGYFL), 91-111 (AAIIAGFFAFIGHLFPVWIGF), 124-144 (LLGVAPIMVVLFAAVWLAVAF), and 148-168 (YSSLSALVAMLVIPVALLILG).

The protein belongs to the PlsY family. In terms of assembly, probably interacts with PlsX.

The protein localises to the cell inner membrane. It carries out the reaction an acyl phosphate + sn-glycerol 3-phosphate = a 1-acyl-sn-glycero-3-phosphate + phosphate. It participates in lipid metabolism; phospholipid metabolism. Its function is as follows. Catalyzes the transfer of an acyl group from acyl-phosphate (acyl-PO(4)) to glycerol-3-phosphate (G3P) to form lysophosphatidic acid (LPA). This enzyme utilizes acyl-phosphate as fatty acyl donor, but not acyl-CoA or acyl-ACP. The sequence is that of Glycerol-3-phosphate acyltransferase from Rhizobium etli (strain CIAT 652).